The primary structure comprises 180 residues: Shikimate kinase (180 aa).

Gly-19–Thr-24 contacts ATP. Thr-23 provides a ligand contact to Mg(2+). Substrate contacts are provided by Asp-41, Arg-65, and Gly-87. Arg-125 contributes to the ATP binding site. Arg-144 is a binding site for substrate.

This sequence belongs to the shikimate kinase family. Monomer. Requires Mg(2+) as cofactor.

The protein localises to the cytoplasm. It catalyses the reaction shikimate + ATP = 3-phosphoshikimate + ADP + H(+). It functions in the pathway metabolic intermediate biosynthesis; chorismate biosynthesis; chorismate from D-erythrose 4-phosphate and phosphoenolpyruvate: step 5/7. Catalyzes the specific phosphorylation of the 3-hydroxyl group of shikimic acid using ATP as a cosubstrate. In Acinetobacter baylyi (strain ATCC 33305 / BD413 / ADP1), this protein is Shikimate kinase.